We begin with the raw amino-acid sequence, 280 residues long: MIKITQNIECSNAAPFVLFGGINVLESEDLALTACAEYVRVTEKLGIPYVFKASFDKANRSSIHSYRGPGMEEGLRIFEKVKAEFGVPIITDVHEIYQCAPVAEVVDVLQLPAFLARQTDLVVALAKTGKPVNIKKPQFLSPSQMQNIVQKFKEAGNDQLILCDRGTCMGYDNLVVDMLGFGVMKRTCDDLPIIFDVTHALQNRDPSGAASGGRREQVVDLARAGMGVGLAGLFLEAHPNPDQAKCDGPSALPLDKLEPFLAQIKALDDLVKSFPPLVIG.

This sequence belongs to the KdsA family.

The protein localises to the cytoplasm. It carries out the reaction D-arabinose 5-phosphate + phosphoenolpyruvate + H2O = 3-deoxy-alpha-D-manno-2-octulosonate-8-phosphate + phosphate. The protein operates within carbohydrate biosynthesis; 3-deoxy-D-manno-octulosonate biosynthesis; 3-deoxy-D-manno-octulosonate from D-ribulose 5-phosphate: step 2/3. It functions in the pathway bacterial outer membrane biogenesis; lipopolysaccharide biosynthesis. In Pseudomonas putida (strain W619), this protein is 2-dehydro-3-deoxyphosphooctonate aldolase.